Here is a 361-residue protein sequence, read N- to C-terminus: Caveolae-associated protein 4 (361 aa).

The interval 1–21 (MEHNGSASNADKIHQNRLSNV) is disordered. The stretch at 100–124 (IKDVKARVEKQQTHVKKVEAKQEEI) forms a coiled coil. S152, S171, and S172 each carry phosphoserine. The stretch at 204–248 (ENMQKTRQNFDKKVNRIRTRIVTPERRERLRQSGERLRQSGERLK) forms a coiled coil. Residues 230–255 (RERLRQSGERLRQSGERLKQSGERFK) are compositionally biased toward basic and acidic residues. Disordered stretches follow at residues 230–283 (RERL…AVAE) and 310–346 (PEAL…FKPQ). Residue T335 is modified to Phosphothreonine. A Phosphoserine modification is found at S354.

Belongs to the CAVIN family. Component of the CAVIN complex composed of CAVIN1, CAVIN2, CAVIN3 and CAVIN4. Interacts with CAVIN1, ADRA1A, ADRA1B, MAPK1 and MAPK3. Interacts with CAVIN2; this augments the transactivation of NPPA.

It localises to the cytoplasm. It is found in the myofibril. The protein resides in the sarcomere. The protein localises to the cytosol. Its subcellular location is the cell membrane. It localises to the sarcolemma. It is found in the membrane. The protein resides in the caveola. Modulates the morphology of formed caveolae in cardiomyocytes, but is not required for caveolar formation. Facilitates the recruitment of MAPK1/3 to caveolae within cardiomyocytes and regulates alpha-1 adrenergic receptor-induced hypertrophic responses in cardiomyocytes through MAPK1/3 activation. Contributes to proper membrane localization and stabilization of caveolin-3 (CAV3) in cardiomyocytes. Induces RHOA activation and activates NPPA transcription and myofibrillar organization through the Rho/ROCK signaling pathway. The sequence is that of Caveolae-associated protein 4 (CAVIN4) from Bos taurus (Bovine).